Reading from the N-terminus, the 377-residue chain is NADH dehydrogenase [ubiquinone] 1 alpha subcomplex subunit 9, mitochondrial (377 aa).

A mitochondrion-targeting transit peptide spans 1–35 (MAAAVRFRVVRALPMSRPAITAAATSVFCGSSHRQ). An N6-succinyllysine modification is found at K175. N6-acetyllysine occurs at positions 189 and 370.

Belongs to the complex I NDUFA9 subunit family. As to quaternary structure, complex I is composed of 45 different subunits. This a component of the hydrophobic protein fraction. Interacts with BLOC1S1. Interacts with SLC2A4. Interacts with CLOCK. Interacts with RAB5IF. FAD is required as a cofactor. Acetylated on lysine residues. BLOC1S1 is required for acetylation. Acetylated by CLOCK in a circadian manner.

The protein resides in the mitochondrion matrix. Accessory subunit of the mitochondrial membrane respiratory chain NADH dehydrogenase (Complex I), that is believed not to be involved in catalysis. Complex I functions in the transfer of electrons from NADH to the respiratory chain. The immediate electron acceptor for the enzyme is believed to be ubiquinone. In Mus musculus (Mouse), this protein is NADH dehydrogenase [ubiquinone] 1 alpha subcomplex subunit 9, mitochondrial (Ndufa9).